A 215-amino-acid chain; its full sequence is Pyridoxine/pyridoxamine 5'-phosphate oxidase (215 aa).

Residues 9 to 12 and Lys-69 each bind substrate; that span reads RRDY. FMN contacts are provided by residues 64 to 69, 79 to 80, Lys-86, and Gln-108; these read RVLLLK and FS. 3 residues coordinate substrate: Tyr-126, Arg-130, and Ser-134. FMN contacts are provided by residues 143–144 and Trp-188; that span reads QS. 194 to 196 serves as a coordination point for substrate; the sequence is RLH. Arg-198 serves as a coordination point for FMN.

This sequence belongs to the pyridoxamine 5'-phosphate oxidase family. In terms of assembly, homodimer. Requires FMN as cofactor.

It carries out the reaction pyridoxamine 5'-phosphate + O2 + H2O = pyridoxal 5'-phosphate + H2O2 + NH4(+). It catalyses the reaction pyridoxine 5'-phosphate + O2 = pyridoxal 5'-phosphate + H2O2. The protein operates within cofactor metabolism; pyridoxal 5'-phosphate salvage; pyridoxal 5'-phosphate from pyridoxamine 5'-phosphate: step 1/1. Its pathway is cofactor metabolism; pyridoxal 5'-phosphate salvage; pyridoxal 5'-phosphate from pyridoxine 5'-phosphate: step 1/1. In terms of biological role, catalyzes the oxidation of either pyridoxine 5'-phosphate (PNP) or pyridoxamine 5'-phosphate (PMP) into pyridoxal 5'-phosphate (PLP). The protein is Pyridoxine/pyridoxamine 5'-phosphate oxidase of Azotobacter vinelandii (strain DJ / ATCC BAA-1303).